The chain runs to 156 residues: MKVIEGVIPAPQAKIAIVVSRFNSFINDRLVEGALDTLKRQGQIADENITLVKVPGAVELPLAAKRLAKSKQFDGIVALGCVIRGGTAHFEYVSGECAKGLAQVALEAEIPVAFGVLTTENIEQAIERAGTKAGNKGVEAALSTLEMINVMNALGA.

5-amino-6-(D-ribitylamino)uracil is bound by residues F22, 57–59, and 81–83; these read AVE and CVI. 86–87 serves as a coordination point for (2S)-2-hydroxy-3-oxobutyl phosphate; sequence GT. H89 acts as the Proton donor in catalysis. Residue F114 coordinates 5-amino-6-(D-ribitylamino)uracil. Residue R128 participates in (2S)-2-hydroxy-3-oxobutyl phosphate binding.

This sequence belongs to the DMRL synthase family. As to quaternary structure, forms an icosahedral capsid composed of 60 subunits, arranged as a dodecamer of pentamers.

The catalysed reaction is (2S)-2-hydroxy-3-oxobutyl phosphate + 5-amino-6-(D-ribitylamino)uracil = 6,7-dimethyl-8-(1-D-ribityl)lumazine + phosphate + 2 H2O + H(+). The protein operates within cofactor biosynthesis; riboflavin biosynthesis; riboflavin from 2-hydroxy-3-oxobutyl phosphate and 5-amino-6-(D-ribitylamino)uracil: step 1/2. Its function is as follows. Catalyzes the formation of 6,7-dimethyl-8-ribityllumazine by condensation of 5-amino-6-(D-ribitylamino)uracil with 3,4-dihydroxy-2-butanone 4-phosphate. This is the penultimate step in the biosynthesis of riboflavin. The polypeptide is 6,7-dimethyl-8-ribityllumazine synthase (Tolumonas auensis (strain DSM 9187 / NBRC 110442 / TA 4)).